The chain runs to 111 residues: Large ribosomal subunit protein uL24 (111 aa).

It belongs to the universal ribosomal protein uL24 family. In terms of assembly, part of the 50S ribosomal subunit.

Its function is as follows. One of two assembly initiator proteins, it binds directly to the 5'-end of the 23S rRNA, where it nucleates assembly of the 50S subunit. Functionally, one of the proteins that surrounds the polypeptide exit tunnel on the outside of the subunit. The chain is Large ribosomal subunit protein uL24 from Chlamydia pneumoniae (Chlamydophila pneumoniae).